The following is a 265-amino-acid chain: Cell division protein DivIB (265 aa).

The Cytoplasmic segment spans residues 1 to 30; it reads MKNSKVIKLQDRVPKLKNQQKKKKKNVNHR. The helical transmembrane segment at 31–51 threads the bilayer; that stretch reads LILYISILFLLVLFLIYFRSP. The Extracellular segment spans residues 52 to 265; that stretch reads LSNIKKISVF…NRMIVFNTLS (214 aa). The POTRA domain maps to 53–121; it reads SNIKKISVFG…NKIDVHIEEY (69 aa).

The protein belongs to the FtsQ/DivIB family. DivIB subfamily.

The protein resides in the cell membrane. In terms of biological role, cell division protein that may be involved in stabilizing or promoting the assembly of the division complex. The protein is Cell division protein DivIB of Bacillus anthracis.